The sequence spans 288 residues: Mortality factor 4-like protein 2 (288 aa).

The segment covering 1–15 (MSSRKQGSQPRGQQS) has biased composition (polar residues). Residues 1–113 (MSSRKQGSQP…RADPTVESEE (113 aa)) form a disordered region. Serine 71 is modified (phosphoserine). The MRG domain occupies 117–288 (NRMEVKVKIP…ASAEYHRKAL (172 aa)).

In terms of assembly, component of the NuA4 histone acetyltransferase complex which contains the catalytic subunit KAT5/TIP60 and the subunits EP400, TRRAP/PAF400, BRD8/SMAP, EPC1, DMAP1/DNMAP1, RUVBL1/TIP49, RUVBL2, ING3, actin, ACTL6A/BAF53A, MORF4L1/MRG15, MORF4L2/MRGX, MRGBP, YEATS4/GAS41 and VPS72/YL1. The NuA4 complex interacts with MYC and the adenovirus E1A protein. MORF4L1 may also participate in the formation of NuA4 related complexes which lack the KAT5/TIP60 catalytic subunit, but which include the SWI/SNF related protein SRCAP. Component of the MSIN3A histone deacetylase complex, which includes SIN3A, HDAC2, ARID4B, MORF4L1, RBBP4/RbAp48, and RBBP7/RbAp46. Interacts with MRFAP1 and RB1. May also interact with one or more as yet undefined members of the TLE (transducin-like enhancer of split) family of transcriptional repressors.

Its subcellular location is the nucleus. Functionally, component of the NuA4 histone acetyltransferase complex which is involved in transcriptional activation of select genes principally by acetylation of nucleosomal histone H4 and H2A. This modification may both alter nucleosome - DNA interactions and promote interaction of the modified histones with other proteins which positively regulate transcription. This complex may be required for the activation of transcriptional programs associated with oncogene and proto-oncogene mediated growth induction, tumor suppressor mediated growth arrest and replicative senescence, apoptosis, and DNA repair. The NuA4 complex ATPase and helicase activities seem to be, at least in part, contributed by the association of RUVBL1 and RUVBL2 with EP400. NuA4 may also play a direct role in DNA repair when directly recruited to sites of DNA damage. Also a component of the MSIN3A complex which acts to repress transcription by deacetylation of nucleosomal histones. The sequence is that of Mortality factor 4-like protein 2 (MORF4L2) from Homo sapiens (Human).